We begin with the raw amino-acid sequence, 231 residues long: Flagellar L-ring protein (231 aa).

The first 18 residues, 1–18 (MNRLLSVFALGGAVLLAG), serve as a signal peptide directing secretion. C19 carries the N-palmitoyl cysteine lipid modification. C19 is lipidated: S-diacylglycerol cysteine.

This sequence belongs to the FlgH family. The basal body constitutes a major portion of the flagellar organelle and consists of four rings (L,P,S, and M) mounted on a central rod.

Its subcellular location is the cell outer membrane. The protein resides in the bacterial flagellum basal body. Functionally, assembles around the rod to form the L-ring and probably protects the motor/basal body from shearing forces during rotation. The sequence is that of Flagellar L-ring protein from Pseudomonas putida (strain GB-1).